The sequence spans 629 residues: MNKQQKEFKSFYSIRKSSLGVASVAISTLLLLMSNGEAQAAEETGGTNTEAQPKTEAVASPSTTTEKAPEAKSVANAVSVSNKEVEAPTSETKEVKPAAKSDNNTYPILNQELREAIKNPAIKDKDHSAPNSRPIDFEMKKENGEQQFYHYASSVKPARVIFTDSKPEIELGLQSGQFWRKFEVYEGDKKLPIKLVSYDTVKDYAYIRFSVSNGTKAVKIVSSTHFNNKEEKYDYTLMEFAQPIYNSADKFKTEEDYKAEKLLAPYKKAKTLERQVYELNKIQDKLPEKLKAEYKKKLEETKKALDEQVKSAITEFQNVQPTNEKMTDLQDTKYVVYESVENNESMMDTFVKHPIKTGMLNGKKYMVMETTNDDYWKDFMVEGQRVRTISKDAKNNTRTIIFPYVEGKTLYDAIVKVHVKTIDYDGQYHVRIVDKEAFTKANADKTNKKEQQDNSAKKETTPATPSKPTTPPVEKESQKQDSQKDDNKQSPSVEKENDASSESGKDKTPATKPAKGEVESSSTTPTKVVSTTQNAAKPTTASSETTKDVVQTSAGSSEAKDSAPLQKANIKNTNDGHTQSENNKNTQENKAKSLPQTGEESNKDMTLPLMSLLALSSIIAFVLPRKRKN.

The first 40 residues, 1 to 40 (MNKQQKEFKSFYSIRKSSLGVASVAISTLLLLMSNGEAQA), serve as a signal peptide directing secretion. Positions 12-23 (YSIRKSSLGVAS) match the YSIRK-G/S signaling motif motif. A disordered region spans residues 38–104 (AQAAEETGGT…VKPAAKSDNN (67 aa)). Basic and acidic residues predominate over residues 83–99 (KEVEAPTSETKEVKPAA). 2 consecutive NEAT domains span residues 128 to 253 (SAPN…KFKT) and 325 to 442 (KMTD…TKAN). Heme-binding residues include methionine 346 and tyrosine 424. Composition is skewed to basic and acidic residues over residues 443-460 (ADKT…KKET) and 473-518 (VEKE…KGEV). Residues 443-605 (ADKTNKKEQQ…QTGEESNKDM (163 aa)) form a disordered region. Residues 519 to 532 (ESSSTTPTKVVSTT) show a composition bias toward low complexity. 2 stretches are compositionally biased toward polar residues: residues 533–556 (QNAA…SAGS) and 569–599 (NIKN…QTGE). The LPXTG sorting signal signature appears at 594-598 (LPQTG). Threonine 597 is modified (pentaglycyl murein peptidoglycan amidated threonine). Positions 598–629 (GEESNKDMTLPLMSLLALSSIIAFVLPRKRKN) are cleaved as a propeptide — removed by sortase A.

It belongs to the IsdB family. In terms of assembly, interacts with host HBA; this interaction allows heme extraction as iron source. Interacts with IsdA.

It is found in the secreted. Its subcellular location is the cell wall. Its function is as follows. Cell wall-anchored surface receptor that extracts heme from oxidized metHb to enable growth on hemoglobin as a sole iron source. Rapidly extracts heme from hemoglobin and transfers it to IsdA or IsdC, which then relays it to the membrane transporter/IsdEF for internalization. Also promotes resistance to hydrogen peroxide and killing by neutrophils. In Staphylococcus aureus (strain bovine RF122 / ET3-1), this protein is Iron-regulated surface determinant protein B (isdB).